A 285-amino-acid chain; its full sequence is 2-dehydro-3-deoxyphosphooctonate aldolase (285 aa).

Belongs to the KdsA family.

It localises to the cytoplasm. It catalyses the reaction D-arabinose 5-phosphate + phosphoenolpyruvate + H2O = 3-deoxy-alpha-D-manno-2-octulosonate-8-phosphate + phosphate. It participates in carbohydrate biosynthesis; 3-deoxy-D-manno-octulosonate biosynthesis; 3-deoxy-D-manno-octulosonate from D-ribulose 5-phosphate: step 2/3. The protein operates within bacterial outer membrane biogenesis; lipopolysaccharide biosynthesis. The polypeptide is 2-dehydro-3-deoxyphosphooctonate aldolase (Acinetobacter baylyi (strain ATCC 33305 / BD413 / ADP1)).